Here is a 442-residue protein sequence, read N- to C-terminus: Probable alpha-galactosidase B (442 aa).

A signal peptide spans 1–19; sequence MQRYISLSVSLSLLSGANA. Disulfide bonds link C42–C74 and C124–C154. D152 acts as the Nucleophile in catalysis. Residues N159, N173, N179, and N215 are each glycosylated (N-linked (GlcNAc...) asparagine). Residue 224–228 participates in substrate binding; the sequence is EWGQA. N-linked (GlcNAc...) asparagine glycosylation is present at N235. D246 acts as the Proton donor in catalysis. N285 is a glycosylation site (N-linked (GlcNAc...) asparagine).

The protein belongs to the glycosyl hydrolase 27 family.

The protein resides in the secreted. The enzyme catalyses Hydrolysis of terminal, non-reducing alpha-D-galactose residues in alpha-D-galactosides, including galactose oligosaccharides, galactomannans and galactolipids.. Hydrolyzes a variety of simple alpha-D-galactoside as well as more complex molecules such as oligosaccharides and polysaccharides. The chain is Probable alpha-galactosidase B (aglB) from Aspergillus oryzae (strain ATCC 42149 / RIB 40) (Yellow koji mold).